Reading from the N-terminus, the 373-residue chain is MTLQFPIQAPARYAGETEPVKRPREFACFSYDKDHKFRLDDSSMKWYYPPEIGTNLSHGYDTFIKHDDSVDEHLDSLLKTIADHEQQTGGPIDAHIVTWRGMLTKVGGSDASFLSLWFEMNATLYRLTFTSGYKFETLSTIPRPWGETTRDYIENRDNEVTNNKEQYCSVVRTGFGKSIVCLGGEVDAIWDAKPETPGKPINWVELKTTAEIHTHNDRFKFDRKLMRYWIQSFLLGVPKIIVGYRTQDGILSGVEEFSTLSMPQDVQRRKTAKWDGNVCIKFASLFLDWLRQSINDGGVWRIRRENKSDHIELFKVEEVGHGSIITDEFMNWRIKLSLNKDKPPGFEPSDAADAEPSMAEEPVPETASASGAY.

Residue glutamate 136 coordinates a divalent metal cation. Substrate contacts are provided by cysteine 168 and glutamate 185. Positions 187, 205, and 206 each coordinate a divalent metal cation. Lysine 207 and glutamine 231 together coordinate substrate. The tract at residues 340 to 373 (KDKPPGFEPSDAADAEPSMAEEPVPETASASGAY) is disordered.

Belongs to the DXO/Dom3Z family. As to quaternary structure, interacts with RAT1; the interaction is direct, stabilizes RAT1 protein structure and stimulates its exoribonuclease activity. The interaction also stimulates RAI1 pyrophosphohydrolase activity, probably by recruiting it to mRNA substrates. It depends on a divalent metal cation as a cofactor.

Its subcellular location is the nucleus. It carries out the reaction a 5'-end NAD(+)-phospho-ribonucleoside in mRNA + H2O = a 5'-end phospho-ribonucleoside in mRNA + NAD(+) + H(+). The catalysed reaction is a 5'-end (N(7)-methyl 5'-triphosphoguanosine)-ribonucleoside-ribonucleotide in mRNA + H2O = a (N(7)-methyl 5'-triphosphoguanosine)-nucleoside + a 5'-end phospho-ribonucleoside in mRNA + H(+). The enzyme catalyses a 5'-end triphospho-ribonucleoside in mRNA + H2O = a 5'-end phospho-ribonucleoside in mRNA + diphosphate + H(+). Functionally, decapping enzyme for NAD-capped RNAs: specifically hydrolyzes the nicotinamide adenine dinucleotide (NAD) cap from a subset of RNAs by removing the entire NAD moiety from the 5'-end of an NAD-capped RNA. The NAD-cap is present at the 5'-end of some RNAs and snoRNAs. In contrast to the canonical 5'-end N7 methylguanosine (m7G) cap, the NAD cap promotes mRNA decay. Also acts as a non-canonical decapping enzyme that removes the entire cap structure of m7G capped or incompletely capped RNAs. Has decapping activity toward incomplete 5'-end m7G cap mRNAs such as unmethylated 5'-end-capped RNA (cap0), while it has no activity toward 2'-O-ribose methylated m7G cap (cap1). Also possesses RNA 5'-pyrophosphohydrolase activity by hydrolyzing the 5'-end triphosphate to release pyrophosphates. Stimulates exoribonuclease activity of Rat1, allowing it to degrade RNAs with stable secondary structure more effectively. This Chaetomium globosum (strain ATCC 6205 / CBS 148.51 / DSM 1962 / NBRC 6347 / NRRL 1970) (Soil fungus) protein is Decapping nuclease RAI1 (RAI1).